A 184-amino-acid chain; its full sequence is Threonylcarbamoyl-AMP synthase (184 aa).

The region spanning methionine 1–glycine 184 is the YrdC-like domain.

This sequence belongs to the SUA5 family. TsaC subfamily.

It is found in the cytoplasm. It carries out the reaction L-threonine + hydrogencarbonate + ATP = L-threonylcarbamoyladenylate + diphosphate + H2O. Required for the formation of a threonylcarbamoyl group on adenosine at position 37 (t(6)A37) in tRNAs that read codons beginning with adenine. Catalyzes the conversion of L-threonine, HCO(3)(-)/CO(2) and ATP to give threonylcarbamoyl-AMP (TC-AMP) as the acyladenylate intermediate, with the release of diphosphate. This chain is Threonylcarbamoyl-AMP synthase, found in Haemophilus ducreyi (strain 35000HP / ATCC 700724).